A 479-amino-acid polypeptide reads, in one-letter code: Ribosomal RNA small subunit methyltransferase F (479 aa).

S-adenosyl-L-methionine contacts are provided by residues 125–131 (AAAPGSK), Glu-149, Asp-176, and Asp-194. Cys-247 serves as the catalytic Nucleophile.

Belongs to the class I-like SAM-binding methyltransferase superfamily. RsmB/NOP family.

It is found in the cytoplasm. It catalyses the reaction cytidine(1407) in 16S rRNA + S-adenosyl-L-methionine = 5-methylcytidine(1407) in 16S rRNA + S-adenosyl-L-homocysteine + H(+). Its function is as follows. Specifically methylates the cytosine at position 1407 (m5C1407) of 16S rRNA. This Salmonella newport (strain SL254) protein is Ribosomal RNA small subunit methyltransferase F.